Here is a 340-residue protein sequence, read N- to C-terminus: Aldose 1-epimerase (340 aa).

Substrate is bound at residue R77. H172 (proton donor) is an active-site residue. D243 provides a ligand contact to substrate. Residue E305 is the Proton acceptor of the active site.

The protein belongs to the aldose epimerase family.

It localises to the cytoplasm. The enzyme catalyses alpha-D-glucose = beta-D-glucose. The protein operates within carbohydrate metabolism; hexose metabolism. Mutarotase converts alpha-aldose to the beta-anomer. It is active on D-glucose, L-arabinose, D-xylose, D-galactose, maltose and lactose. This chain is Aldose 1-epimerase (galM), found in Haemophilus influenzae (strain ATCC 51907 / DSM 11121 / KW20 / Rd).